Here is a 350-residue protein sequence, read N- to C-terminus: Transmembrane protein 185A (350 aa).

The next 7 membrane-spanning stretches (helical) occupy residues 16–36 (LIYACLLLFSVLLALRLDGII), 41–61 (WAVFAPIWLWKLMVIVGASVG), 81–101 (FKAMLIAVGIHLLLLMFEVLV), 111–131 (FWLLVFMPLFFVSPVSVAACV), 177–197 (ILMSFLCLVVLYYIVWSVLFL), 211–231 (ITMALSWMTIVVPLLTFEILL), and 240–260 (AFSCIPIFVPLWLSLITLMAT). A mediates interaction with MAP1B region spans residues 298 to 350 (DLHHEDNEETEETPVPEPPKIAPMFRKKARVVITQSPGKYALPPPKLNIEMPD).

Belongs to the TMEM185 family. As to quaternary structure, interacts with MAP1B.

The protein localises to the cell projection. Its subcellular location is the dendrite. The protein resides in the membrane. The protein is Transmembrane protein 185A (TMEM185A) of Pongo abelii (Sumatran orangutan).